Reading from the N-terminus, the 498-residue chain is TORTIFOLIA1-like protein 5 (498 aa).

HEAT repeat units follow at residues 56–93, 97–134, 136–173, 177–214, and 219–257; these read ETFS…SHGD, PHLS…NITG, PFSI…AADE, EQLQ…AVGG, and KAVL…VEEE. The tract at residues 296-423 is disordered; the sequence is EGDSTEVSES…SSSQAKSNAE (128 aa). Residues 300 to 322 are compositionally biased toward low complexity; the sequence is TEVSESSSSSKSASSGLSATSGK. Residues 343-366 are compositionally biased toward basic and acidic residues; it reads NDVEPLDRGDTPKDVEQEAVVSKE. A compositionally biased stretch (polar residues) spans 390 to 400; it reads NGSNKSQVVQS. Residue serine 426 is modified to Phosphoserine.

The sequence is that of TORTIFOLIA1-like protein 5 from Arabidopsis thaliana (Mouse-ear cress).